A 472-amino-acid polypeptide reads, in one-letter code: Replicative helicase loading/DNA remodeling protein DnaB (472 aa).

A DDBH1 region spans residues methionine 1–proline 112. The segment at aspartate 210 to alanine 302 is DDBH2-1. The segment at glutamate 303–lysine 411 is DDBH2-2. The segment at serine 415 to tyrosine 472 is disordered. Basic and acidic residues-rich tracts occupy residues valine 421–alanine 437 and histidine 448–lysine 465.

It belongs to the DnaB/DnaD family. In terms of assembly, homotetramer. Also forms higher-order oligomers, can be induced by some ssDNA. The DNA replisome assembles sequentially on oriC in this order; DnaA, DnaD, DnaB, DnaI-DnaC helicase. In atomic force microscopy forms a square with a small central hole. Part of the replication restart primosome which assembles in this order; PriA, DnaD then DnaB. The preferred DNA substrate mimics an arrested DNA replication fork with unreplicated lagging strand. Interacts with DnaC, but probably not as a tetramer. Interacts with DnaD but no interaction with PriA was seen. Interacts with cell cycle regulator CcrZ. In early growth phase only full-length protein is detected, during late growth and stationary phase full-length and C-terminally truncated proteins are seen (at protein level). Truncated protein is only seen in cytoplasmic fractions.

The protein resides in the cytoplasm. Its subcellular location is the cell membrane. Its function is as follows. Helps DnaI load the DnaC replicative helicase onto single-stranded (ss)DNA. During DNA replication from the origin of replication (oriC) in the DNA replisome, DnaD is required after DnaA, before DnaB and before subsequent helicase DnaC loading. Component of the replication restart primosome, which reloads the replicative helicase on sites other than oriC. DnaB, DnaD and DnaI may also be required for a PriA-independent pathway of replication fork restart. DnaB and DnaD work together to allow DnaB access to ssDNA. DNA replication at oriC might originate on the inner face of the cell membrane; DnaB is essential for both replication initiation and cell membrane attachment of the origin region of the chromosome and plasmids. Weakly binds ssDNA, preferentially binds double-stranded (ds)DNA, and replication fork-like substrates. Remodels DNA, laterally compacts supercoiled plasmid and linear DNA, forms beads along the dsDNA. Together DnaB and DnaD form bipolar complexes on plasmid DNA. DnaB and DnaD are also required to load helicase on the repN plasmid origin of replication (oriN). The chain is Replicative helicase loading/DNA remodeling protein DnaB from Bacillus subtilis (strain 168).